We begin with the raw amino-acid sequence, 2034 residues long: Sperm vesicle fusion protein fer-1 (2034 aa).

Residues 1-80 are disordered; sequence MTVKEKLLKV…GGSDIELLPD (80 aa). Over 1–1998 the chain is Cytoplasmic; it reads MTVKEKLLKV…CIKYFWHYYG (1998 aa). The span at 66 to 79 shows a compositional bias: acidic residues; the sequence is ELSDDGGSDIELLP. C2 domains follow at residues 229–367, 954–1082, 1120–1246, and 1363–1484; these read RIDE…YLPT, DSED…PQWF, YKER…KSDH, and KKGK…ATGG. The disordered stretch occupies residues 1563-1619; it reads QKAGKENFSDGSDQQNEDVSDGSWDEEDLEREKEKLKWEKHRSKGKPLKKVTTEKAE. Residues 1577 to 1591 are compositionally biased toward acidic residues; the sequence is QNEDVSDGSWDEEDL. The span at 1600 to 1611 shows a compositional bias: basic residues; sequence WEKHRSKGKPLK. The 148-residue stretch at 1684–1831 folds into the C2 5 domain; the sequence is EYGAIPAPFN…EGIGSPSDVG (148 aa). A disordered region spans residues 1953–1972; that stretch reads QEPAGKKRSEPNHSPFLEKP. A helical membrane pass occupies residues 1999-2019; that stretch reads LQILLWLIIIVILILTIFVLL. The Extracellular segment spans residues 2020 to 2034; that stretch reads HTWPTILAEIIKAIF.

Belongs to the ferlin family. In terms of tissue distribution, exclusively expressed in the testis.

It localises to the membrane. Functionally, required for the fusion of the membranous organelles (MOs) with the plasma membrane, a process essential in spermiogenesis. The sequence is that of Sperm vesicle fusion protein fer-1 (fer-1) from Caenorhabditis elegans.